Here is a 208-residue protein sequence, read N- to C-terminus: MAEFSPVLPPLRDDGGGGRYGQPLFPRSRSGSESDSELSQSLARTKTRSYGSTASVTAPLGEKYIEHRVTDGETLQGIALKYGVTMEQIKRVNKLFSNDCIFLRNTLSIPVKSEKRSLFNGLSLESPDSEGNTPQESPCVSQDVDAPSPPPEPSVPEPNTRPVQAEELSAKDYLHRLDLQIKQSKLAARKLKEDGGREEDDTNSYQEI.

A disordered region spans residues 1–54 (MAEFSPVLPPLRDDGGGGRYGQPLFPRSRSGSESDSELSQSLARTKTRSYGSTA). Positions 27 to 42 (RSRSGSESDSELSQSL) are enriched in low complexity. The 45-residue stretch at 65-109 (IEHRVTDGETLQGIALKYGVTMEQIKRVNKLFSNDCIFLRNTLSI) folds into the LysM domain. Disordered regions lie at residues 122–169 (LSLE…EELS) and 187–208 (AARK…YQEI). Positions 129–140 (SEGNTPQESPCV) are enriched in polar residues. Residues 147-156 (PSPPPEPSVP) are compositionally biased toward pro residues.

This Danio rerio (Zebrafish) protein is LysM and putative peptidoglycan-binding domain-containing protein 2 (lysmd2).